The chain runs to 216 residues: Probable calcium-binding protein CML35 (216 aa).

The segment at 18-58 (TKSKASVSRSEPSSFSSNASSSSSDGSYGNLKQGPTATPIS) is disordered. Residues 23–44 (SVSRSEPSSFSSNASSSSSDGS) show a composition bias toward low complexity. 4 consecutive EF-hand domains span residues 66–101 (DFYTELVQAFKLIDRDDDGVVSRGDLAALISRLSHE), 103–138 (PSQEEVSLMLREVDGGDGGCISLEDLASRVAGTSGE), 141–176 (VETEELREVFEIFDVDRNGKISAEELHRVFGVIGDE), and 178–213 (CTLEECMRMIATVDGNGDGFVCFDDFCRMMVPAMND). Positions 79, 81, 83, and 90 each coordinate Ca(2+). Residues aspartate 154, aspartate 156, asparagine 158, lysine 160, glutamate 165, aspartate 191, asparagine 193, aspartate 195, and aspartate 202 each coordinate Ca(2+).

Its function is as follows. Potential calcium sensor. This is Probable calcium-binding protein CML35 (CML35) from Arabidopsis thaliana (Mouse-ear cress).